A 125-amino-acid polypeptide reads, in one-letter code: Large-conductance mechanosensitive channel (125 aa).

Helical transmembrane passes span 19-39, 42-62, and 67-87; these read VGVI…SNLI, LIGI…IGSA, and GSFL…FLMV.

The protein belongs to the MscL family. Homopentamer.

Its subcellular location is the cell membrane. Functionally, channel that opens in response to stretch forces in the membrane lipid bilayer. May participate in the regulation of osmotic pressure changes within the cell. The polypeptide is Large-conductance mechanosensitive channel (Limosilactobacillus fermentum (strain NBRC 3956 / LMG 18251) (Lactobacillus fermentum)).